A 162-amino-acid chain; its full sequence is Peroxiredoxin-2D (162 aa).

Residues 4 to 162 form the Thioredoxin domain; sequence ITVGDVVPDG…SSAEDILKAL (159 aa). The active-site Cysteine sulfenic acid (-SOH) intermediate is cysteine 51.

The protein belongs to the peroxiredoxin family. Prx5 subfamily. In terms of assembly, monomer. As to expression, exclusively expressed in buds and flowers. Also detected in pollen.

Its subcellular location is the cytoplasm. It carries out the reaction [glutaredoxin]-dithiol + a hydroperoxide = [glutaredoxin]-disulfide + an alcohol + H2O. Thiol-specific peroxidase that catalyzes the reduction of hydrogen peroxide and organic hydroperoxides to water and alcohols, respectively. Plays a role in cell protection against oxidative stress by detoxifying peroxides. May be involved in intracellular redox signaling. The sequence is that of Peroxiredoxin-2D (PRXIID) from Arabidopsis thaliana (Mouse-ear cress).